Reading from the N-terminus, the 234-residue chain is UPF0502 protein BTH_II0990 (234 aa).

The protein belongs to the UPF0502 family.

The polypeptide is UPF0502 protein BTH_II0990 (Burkholderia thailandensis (strain ATCC 700388 / DSM 13276 / CCUG 48851 / CIP 106301 / E264)).